Consider the following 74-residue polypeptide: Sec-independent protein translocase protein TatA (74 aa).

Residues 1–21 (MGGISIWQLLIIVAIVVLLFG) traverse the membrane as a helical segment. The interval 45–74 (EEPKDAEFKSLDKAENTAQTKKEEKEKEQA) is disordered.

Belongs to the TatA/E family. As to quaternary structure, the Tat system comprises two distinct complexes: a TatABC complex, containing multiple copies of TatA, TatB and TatC subunits, and a separate TatA complex, containing only TatA subunits. Substrates initially bind to the TatABC complex, which probably triggers association of the separate TatA complex to form the active translocon.

The protein resides in the cell inner membrane. Part of the twin-arginine translocation (Tat) system that transports large folded proteins containing a characteristic twin-arginine motif in their signal peptide across membranes. TatA could form the protein-conducting channel of the Tat system. The protein is Sec-independent protein translocase protein TatA of Actinobacillus succinogenes (strain ATCC 55618 / DSM 22257 / CCUG 43843 / 130Z).